Here is a 358-residue protein sequence, read N- to C-terminus: Fructose-bisphosphate aldolase 2, cytoplasmic (358 aa).

Position 39 (Arg39) interacts with substrate. Residue Glu183 is the Proton acceptor of the active site. Residue Lys225 is the Schiff-base intermediate with dihydroxyacetone-P of the active site. Residues 266-268 and Arg298 each bind substrate; that span reads SGG.

It belongs to the class I fructose-bisphosphate aldolase family. In terms of assembly, homotetramer.

The protein resides in the cytoplasm. It localises to the cytosol. It catalyses the reaction beta-D-fructose 1,6-bisphosphate = D-glyceraldehyde 3-phosphate + dihydroxyacetone phosphate. It participates in carbohydrate degradation; glycolysis; D-glyceraldehyde 3-phosphate and glycerone phosphate from D-glucose: step 4/4. In terms of biological role, fructose-bisphosphate aldolase that plays a key role in glycolysis and gluconeogenesis. This Oryza sativa subsp. japonica (Rice) protein is Fructose-bisphosphate aldolase 2, cytoplasmic.